A 610-amino-acid polypeptide reads, in one-letter code: Elongation factor 4 (610 aa).

Positions 14–198 (ANIRNFSIVA…AIVTRLPPPQ (185 aa)) constitute a tr-type G domain. Residues 26–31 (DHGKST) and 145–148 (NKVD) each bind GTP.

This sequence belongs to the TRAFAC class translation factor GTPase superfamily. Classic translation factor GTPase family. LepA subfamily.

It localises to the cell inner membrane. It catalyses the reaction GTP + H2O = GDP + phosphate + H(+). Required for accurate and efficient protein synthesis under certain stress conditions. May act as a fidelity factor of the translation reaction, by catalyzing a one-codon backward translocation of tRNAs on improperly translocated ribosomes. Back-translocation proceeds from a post-translocation (POST) complex to a pre-translocation (PRE) complex, thus giving elongation factor G a second chance to translocate the tRNAs correctly. Binds to ribosomes in a GTP-dependent manner. This chain is Elongation factor 4, found in Nitrobacter hamburgensis (strain DSM 10229 / NCIMB 13809 / X14).